Consider the following 101-residue polypeptide: Ubiquitin-related modifier 1 homolog (101 aa).

Glycine 101 carries the post-translational modification 1-thioglycine. Residue glycine 101 forms a Glycyl lysine isopeptide (Gly-Lys) (interchain with K-? in acceptor proteins) linkage.

This sequence belongs to the URM1 family. Interacts with cer. In terms of processing, C-terminal thiocarboxylation occurs in 2 steps, it is first acyl-adenylated (-COAMP) via the hesA/moeB/thiF part of the MOCS3 homolog, then thiocarboxylated (-COSH) via the rhodanese domain of the MOCS3 homolog.

It localises to the cytoplasm. It functions in the pathway tRNA modification; 5-methoxycarbonylmethyl-2-thiouridine-tRNA biosynthesis. Functionally, acts as a sulfur carrier required for 2-thiolation of mcm(5)S(2)U at tRNA wobble positions of cytosolic tRNA(Lys), tRNA(Glu) and tRNA(Gln). Serves as sulfur donor in tRNA 2-thiolation reaction by being thiocarboxylated (-COSH) at its C-terminus by MOCS3. The sulfur is then transferred to tRNA to form 2-thiolation of mcm(5)S(2)U. Also acts as a ubiquitin-like protein (UBL) that is covalently conjugated via an isopeptide bond to lysine residues of target proteins such as Prx2/Jafrac1, Ciao1, Eip71CD and GILT1. The thiocarboxylated form serves as substrate for conjugation and oxidative stress specifically induces the formation of UBL-protein conjugates. This chain is Ubiquitin-related modifier 1 homolog, found in Drosophila sechellia (Fruit fly).